A 127-amino-acid chain; its full sequence is Fluoride-specific ion channel FluC 1 (127 aa).

The next 4 helical transmembrane spans lie at 3–23 (LLIV…VGQW), 35–55 (IAML…FGLY), 74–94 (IGFF…VLLI), and 102–122 (LFSY…LGFY). Gly78 and Thr81 together coordinate Na(+).

It belongs to the fluoride channel Fluc/FEX (TC 1.A.43) family.

The protein localises to the cell membrane. The catalysed reaction is fluoride(in) = fluoride(out). Na(+) is not transported, but it plays an essential structural role and its presence is essential for fluoride channel function. In terms of biological role, fluoride-specific ion channel. Important for reducing fluoride concentration in the cell, thus reducing its toxicity. This Halalkalibacterium halodurans (strain ATCC BAA-125 / DSM 18197 / FERM 7344 / JCM 9153 / C-125) (Bacillus halodurans) protein is Fluoride-specific ion channel FluC 1.